The following is a 329-amino-acid chain: Ketol-acid reductoisomerase (NADP(+)) (329 aa).

The 181-residue stretch at 2–182 (TQLFYDTDAD…GGTRAGILET (181 aa)) folds into the KARI N-terminal Rossmann domain. Residues 25 to 28 (YGSQ), serine 51, serine 53, and 83 to 86 (DEFQ) contribute to the NADP(+) site. Histidine 108 is a catalytic residue. Glycine 134 serves as a coordination point for NADP(+). The 146-residue stretch at 183-328 (NFKEETETDL…KSLRSMFSWL (146 aa)) folds into the KARI C-terminal knotted domain. Mg(2+)-binding residues include aspartate 191, glutamate 195, glutamate 227, and glutamate 231. Serine 252 serves as a coordination point for substrate.

It belongs to the ketol-acid reductoisomerase family. Mg(2+) serves as cofactor.

The enzyme catalyses (2R)-2,3-dihydroxy-3-methylbutanoate + NADP(+) = (2S)-2-acetolactate + NADPH + H(+). It catalyses the reaction (2R,3R)-2,3-dihydroxy-3-methylpentanoate + NADP(+) = (S)-2-ethyl-2-hydroxy-3-oxobutanoate + NADPH + H(+). Its pathway is amino-acid biosynthesis; L-isoleucine biosynthesis; L-isoleucine from 2-oxobutanoate: step 2/4. It functions in the pathway amino-acid biosynthesis; L-valine biosynthesis; L-valine from pyruvate: step 2/4. In terms of biological role, involved in the biosynthesis of branched-chain amino acids (BCAA). Catalyzes an alkyl-migration followed by a ketol-acid reduction of (S)-2-acetolactate (S2AL) to yield (R)-2,3-dihydroxy-isovalerate. In the isomerase reaction, S2AL is rearranged via a Mg-dependent methyl migration to produce 3-hydroxy-3-methyl-2-ketobutyrate (HMKB). In the reductase reaction, this 2-ketoacid undergoes a metal-dependent reduction by NADPH to yield (R)-2,3-dihydroxy-isovalerate. In Prochlorococcus marinus (strain MIT 9301), this protein is Ketol-acid reductoisomerase (NADP(+)).